The sequence spans 283 residues: Non-selective voltage-gated ion channel VDAC3 (283 aa).

At Cys-2 the chain carries N-acetylcysteine. Thr-4 carries the post-translational modification Phosphothreonine. Residues Lys-12, Lys-15, and Lys-20 each carry the N6-acetyllysine modification. 2 beta stranded membrane passes run 26–35 (MVKIDLRTKS) and 39–47 (VEFSTSGHA). A Glycyl lysine isopeptide (Lys-Gly) (interchain with G-Cter in ubiquitin) cross-link involves residue Lys-53. Transmembrane regions (beta stranded) follow at residues 54–64 (ASGNLETKYKI), 69–76 (LTFTQKWN), and 80–89 (TLGTEISWEN). Lys-90 is modified (N6-acetyllysine). The beta stranded transmembrane segment at 95–104 (LKLTLDTIFV) threads the bilayer. Residues Lys-109 and Lys-110 each participate in a glycyl lysine isopeptide (Lys-Gly) (interchain with G-Cter in ubiquitin) cross-link. The next 10 membrane-spanning stretches (beta stranded) occupy residues 111–120 (SGKLKASYKR), 123–130 (FSLGSNVD), 137–145 (TIYGWAVLA), 150–158 (LAGYQMSFD), 163–175 (KLSQ…GYKA), 178–185 (FQLHTHVN), 189–198 (EFGGSIYQKV), 202–211 (IETSINLAWT), 218–227 (RFGIAAKYKL), and 231–238 (TSLSAKVN). Ser-241 is subject to Phosphoserine. Residues 242–244 (LIG) and 260–264 (SALID) contribute to the NAD(+) site. Beta stranded transmembrane passes span 242-251 (LIGLGYTQTL) and 254-263 (GVKLTLSALI). N6-acetyllysine; alternate is present on Lys-266. A Glycyl lysine isopeptide (Lys-Gly) (interchain with G-Cter in ubiquitin); alternate cross-link involves residue Lys-266. The chain crosses the membrane as a beta stranded span at residues 273 to 282 (HKVGLGFELE).

The protein belongs to the eukaryotic mitochondrial porin family. In terms of assembly, interacts with ARMC12 in a TBC1D21-dependent manner. Interacts with MISFA. Post-translationally, ubiquitinated by PRKN during mitophagy, leading to its degradation and enhancement of mitophagy. Deubiquitinated by USP30.

It localises to the mitochondrion outer membrane. It is found in the membrane. It catalyses the reaction chloride(in) = chloride(out). It carries out the reaction K(+)(in) = K(+)(out). Functionally, non-selective voltage-gated ion channel that mediates the transport of anions and cations through the mitochondrion outer membrane and plasma membrane. Forms a high-conducting channel with a stable open state and a voltage-induced closure with a mild preference for anions over cations. Involved in male fertility and sperm mitochondrial sheath formation. The sequence is that of Non-selective voltage-gated ion channel VDAC3 from Bos taurus (Bovine).